An 840-amino-acid polypeptide reads, in one-letter code: V-type proton ATPase subunit a, vacuolar isoform (840 aa).

The residue at position 2 (Ala2) is an N-acetylalanine. Over 2–404 (AEKEEAIFRS…DCYGIAQYRE (403 aa)) the chain is Cytoplasmic. The stretch at 117 to 145 (LEERLIQMEDATDQIEVQKNDLEQYRFIL) forms a coiled coil. The chain crosses the membrane as a helical span at residues 405–423 (INAGLPTIVTFPFMFAIMF). The Vacuolar portion of the chain corresponds to 424 to 425 (GD). The helical transmembrane segment at 426–442 (MGHGFLMTLAALSLVLN) threads the bilayer. At 443–456 (EKKINKMKRGEIFD) the chain is on the cytoplasmic side. A helical transmembrane segment spans residues 457–486 (MAFTGRYIILLMGVFSMYTGFLYNDIFSKT). The Vacuolar segment spans residues 487–534 (MTIFKSGWKWPDHWKKGESITATSVGTYPIGLDWAWHGTENALLFSNS). The chain crosses the membrane as a helical span at residues 535–554 (YKMKLSILMGFIHMTYSYFF). Over 555 to 572 (SLANHLYFNSMIDIIGNF) the chain is Cytoplasmic. Residues 573–593 (IPGLLFMQGIFGYLSVCIVYK) form a helical membrane-spanning segment. Residues 594–636 (WAVDWVKDGKPAPGLLNMLINMFLSPGTIDDELYPHQAKVQVF) are Vacuolar-facing. Residues 637–656 (LLLMALVCIPWLLLVKPLHF) form a helical membrane-spanning segment. The Cytoplasmic portion of the chain corresponds to 657 to 719 (KFTHKKKSHE…DIMIHQVIHT (63 aa)). The helical transmembrane segment at 720–744 (IEFCLNCVSHTASYLRLWALSLAHA) threads the bilayer. Residues 745-765 (QLSSVLWTMTIQIAFGFRGFV) are Vacuolar-facing. A helical transmembrane segment spans residues 766-804 (GVFMTVALFAMWFALTCAVLVLMEGTSAMLHSLRLHWVE). Residues 805 to 840 (SMSKFFVGEGLPYEPFAFEYKDMEVAVASASSSASS) lie on the Cytoplasmic side of the membrane.

Belongs to the V-ATPase 116 kDa subunit family. V-ATPase is a heteromultimeric enzyme composed of a peripheral catalytic V1 complex (components A to H) attached to an integral membrane V0 proton pore complex (components: a, c, c', c'', d, e, f and VOA1). In terms of processing, glycosylated.

It localises to the vacuole membrane. Functionally, subunit of the V0 complex of vacuolar(H+)-ATPase (V-ATPase), a multisubunit enzyme composed of a peripheral complex (V1) that hydrolyzes ATP and a membrane integral complex (V0) that translocates protons. V-ATPase is responsible for acidifying and maintaining the pH of intracellular compartments. Is present only in vacuolar V-ATPase complexes; enzymes containing this subunit have a 4-fold higher ratio of proton transport to ATP hydrolysis than complexes containing the Golgi/endosomal isoform and undergo reversible dissociation of V1 and V0 in response to glucose depletion. This Saccharomyces cerevisiae (strain ATCC 204508 / S288c) (Baker's yeast) protein is V-type proton ATPase subunit a, vacuolar isoform.